The primary structure comprises 332 residues: Gibberellin 2-beta-dioxygenase (332 aa).

The region spanning 175-280 (KSDSCFRLNH…RLSMIYFGGP (106 aa)) is the Fe2OG dioxygenase domain. Fe cation contacts are provided by histidine 204, aspartate 206, and histidine 261. Arginine 271 is a catalytic residue.

The protein belongs to the iron/ascorbate-dependent oxidoreductase family. GA2OX subfamily. The cofactor is Fe cation.

It catalyses the reaction gibberellin A1 + 2-oxoglutarate + O2 = gibberellin A8 + succinate + CO2. Its pathway is plant hormone biosynthesis; gibberellin biosynthesis. Catalyzes the 2-beta-hydroxylation of several biologically active gibberellins, leading to the homeostatic regulation of their endogenous level. Catabolism of gibberellins (GAs) plays a central role in plant development. Converts GA9/GA20 to GA51/GA29 and GA4/GA1 to GA34/GA8. This is Gibberellin 2-beta-dioxygenase (GA2OX1) from Phaseolus coccineus (Scarlet runner bean).